Consider the following 167-residue polypeptide: Homeobox protein EgHBX3 (167 aa).

Positions 80–139 (SQSKRRVLFNKFQISQLEKRLKQRYLTAQERQELAHTIGLTPTQVKIWFQNHAYKMKRLF) form a DNA-binding region, homeobox.

The protein belongs to the NK-2 homeobox family.

The protein resides in the nucleus. The chain is Homeobox protein EgHBX3 (HBX3) from Echinococcus granulosus (Hydatid tapeworm).